The sequence spans 673 residues: Putative lipase atg15 (673 aa).

Residues 1-7 (MPRKRSR) are Cytoplasmic-facing. A helical; Signal-anchor for type II membrane protein transmembrane segment spans residues 8-28 (FELSIHSLLLSVAVLSGAAYA). The Lumenal portion of the chain corresponds to 29-673 (SGYYPPSQQV…AVTSAPTPTS (645 aa)). 5 N-linked (GlcNAc...) asparagine glycosylation sites follow: Asn-156, Asn-191, Asn-213, Asn-271, and Asn-295. The Charge relay system role is filled by Ser-311. Asn-457 carries N-linked (GlcNAc...) asparagine glycosylation.

The protein belongs to the AB hydrolase superfamily. Lipase family. In terms of assembly, binds to both phosphatidylinositol (PI) and phosphatidylinositol 3,5-bisphosphate (PIP2).

Its subcellular location is the endosome. The protein resides in the multivesicular body membrane. The protein localises to the prevacuolar compartment membrane. The catalysed reaction is a triacylglycerol + H2O = a diacylglycerol + a fatty acid + H(+). Functionally, lipase which is essential for lysis of subvacuolar cytoplasm to vacuole targeted bodies and intravacuolar autophagic bodies. Involved in the lysis of intravacuolar multivesicular body (MVB) vesicles. The intravacuolar membrane disintegration by atg15 is critical to life span extension. This chain is Putative lipase atg15 (atg15), found in Penicillium rubens (strain ATCC 28089 / DSM 1075 / NRRL 1951 / Wisconsin 54-1255) (Penicillium chrysogenum).